The chain runs to 365 residues: Chorismate synthase (365 aa).

Arg48 and Arg54 together coordinate NADP(+). Residues 125–127, 238–239, Gly278, 293–297, and Arg319 contribute to the FMN site; these read RSS, NA, and KPTSS.

It belongs to the chorismate synthase family. Homotetramer. FMNH2 is required as a cofactor.

It catalyses the reaction 5-O-(1-carboxyvinyl)-3-phosphoshikimate = chorismate + phosphate. It participates in metabolic intermediate biosynthesis; chorismate biosynthesis; chorismate from D-erythrose 4-phosphate and phosphoenolpyruvate: step 7/7. Catalyzes the anti-1,4-elimination of the C-3 phosphate and the C-6 proR hydrogen from 5-enolpyruvylshikimate-3-phosphate (EPSP) to yield chorismate, which is the branch point compound that serves as the starting substrate for the three terminal pathways of aromatic amino acid biosynthesis. This reaction introduces a second double bond into the aromatic ring system. The polypeptide is Chorismate synthase (Janthinobacterium sp. (strain Marseille) (Minibacterium massiliensis)).